The chain runs to 173 residues: MSIILGIDPGSRITGYGVIRQVGRQLTYLGSGCIRTKVDDLPSRLKLIYAGVTEIITQFQPDYFAIEQVFMAKNADSALKLGQARGVAIVAAVNQELPVFEYAARQVKQTVVGIGSAEKSQVQHMVRTLLKLPANPQADAADALAIAITHCHVSQNAMQMSESRLNLARGRMR.

Residues D8, E67, and D139 contribute to the active site. 3 residues coordinate Mg(2+): D8, E67, and D139.

Belongs to the RuvC family. Homodimer which binds Holliday junction (HJ) DNA. The HJ becomes 2-fold symmetrical on binding to RuvC with unstacked arms; it has a different conformation from HJ DNA in complex with RuvA. In the full resolvosome a probable DNA-RuvA(4)-RuvB(12)-RuvC(2) complex forms which resolves the HJ. Mg(2+) is required as a cofactor.

Its subcellular location is the cytoplasm. The catalysed reaction is Endonucleolytic cleavage at a junction such as a reciprocal single-stranded crossover between two homologous DNA duplexes (Holliday junction).. Its function is as follows. The RuvA-RuvB-RuvC complex processes Holliday junction (HJ) DNA during genetic recombination and DNA repair. Endonuclease that resolves HJ intermediates. Cleaves cruciform DNA by making single-stranded nicks across the HJ at symmetrical positions within the homologous arms, yielding a 5'-phosphate and a 3'-hydroxyl group; requires a central core of homology in the junction. The consensus cleavage sequence is 5'-(A/T)TT(C/G)-3'. Cleavage occurs on the 3'-side of the TT dinucleotide at the point of strand exchange. HJ branch migration catalyzed by RuvA-RuvB allows RuvC to scan DNA until it finds its consensus sequence, where it cleaves and resolves the cruciform DNA. The sequence is that of Crossover junction endodeoxyribonuclease RuvC from Salmonella dublin (strain CT_02021853).